Here is a 317-residue protein sequence, read N- to C-terminus: Zinc finger protein 771 (317 aa).

Lysine 33 participates in a covalent cross-link: Glycyl lysine isopeptide (Lys-Gly) (interchain with G-Cter in SUMO2). 8 consecutive C2H2-type zinc fingers follow at residues 63-85 (HACP…ARTH), 91-113 (FACT…GRTH), 119-141 (YQCP…RRRH), 147-169 (YACA…LRVH), 175-197 (YACP…RRTH), 203-225 (YACA…RRVH), 231-253 (HRCA…ARTH), and 259-281 (YPCT…RRAH).

It belongs to the krueppel C2H2-type zinc-finger protein family.

The protein localises to the nucleus. In terms of biological role, may be involved in transcriptional regulation. In Mus musculus (Mouse), this protein is Zinc finger protein 771 (Znf771).